We begin with the raw amino-acid sequence, 424 residues long: GTPase Obg (424 aa).

The Obg domain occupies 1–158; the sequence is MFYDQAKIYV…RNLLLELKLL (158 aa). Residues 159 to 329 enclose the OBG-type G domain; the sequence is ADVGLVGFPN…LVYAAAKALP (171 aa). GTP contacts are provided by residues 165–172, 190–194, 212–215, 282–285, and 310–312; these read GFPNVGKS, FTTLV, DIPG, NKMD, and SAA. Positions 172 and 192 each coordinate Mg(2+). Positions 347-424 constitute an OCT domain; sequence TQASAPHRFE…IAGIEFEWEE (78 aa).

It belongs to the TRAFAC class OBG-HflX-like GTPase superfamily. OBG GTPase family. As to quaternary structure, monomer. Requires Mg(2+) as cofactor.

It is found in the cytoplasm. Functionally, an essential GTPase which binds GTP, GDP and possibly (p)ppGpp with moderate affinity, with high nucleotide exchange rates and a fairly low GTP hydrolysis rate. Plays a role in control of the cell cycle, stress response, ribosome biogenesis and in those bacteria that undergo differentiation, in morphogenesis control. The polypeptide is GTPase Obg (Desulfitobacterium hafniense (strain DSM 10664 / DCB-2)).